An 89-amino-acid polypeptide reads, in one-letter code: MVMTAEDKAQVIGEHKKHDGDTGSPEVQVALLTSRIVYLTGHFKSHPKDFHSRTGLLKLVGQRRKLLNYLKKTDVQRYRDLIAKLGLRK.

Residues Met1–Asp21 are compositionally biased toward basic and acidic residues. A disordered region spans residues Met1–Ser24.

Belongs to the universal ribosomal protein uS15 family. As to quaternary structure, part of the 30S ribosomal subunit. Forms a bridge to the 50S subunit in the 70S ribosome, contacting the 23S rRNA.

Its function is as follows. One of the primary rRNA binding proteins, it binds directly to 16S rRNA where it helps nucleate assembly of the platform of the 30S subunit by binding and bridging several RNA helices of the 16S rRNA. In terms of biological role, forms an intersubunit bridge (bridge B4) with the 23S rRNA of the 50S subunit in the ribosome. In Solidesulfovibrio magneticus (strain ATCC 700980 / DSM 13731 / RS-1) (Desulfovibrio magneticus), this protein is Small ribosomal subunit protein uS15.